The sequence spans 155 residues: Small ribosomal subunit protein uS7cz/uS7cy (155 aa).

Belongs to the universal ribosomal protein uS7 family. In terms of assembly, part of the 30S ribosomal subunit.

The protein resides in the plastid. The protein localises to the chloroplast. One of the primary rRNA binding proteins, it binds directly to 16S rRNA where it nucleates assembly of the head domain of the 30S subunit. This Lactuca sativa (Garden lettuce) protein is Small ribosomal subunit protein uS7cz/uS7cy (rps7-A).